Reading from the N-terminus, the 967-residue chain is Phosphoenolpyruvate carboxylase 1 (967 aa).

The residue at position 11 (S11) is a Phosphoserine. Residues H173 and K602 contribute to the active site. S704 is subject to Phosphoserine.

It belongs to the PEPCase type 1 family. Homotetramer. It depends on Mg(2+) as a cofactor. Mn(2+) serves as cofactor. In terms of processing, the phosphorylation of Ser-11 is reversibly promoted by inorganic phosphate (Pi) deprivation. Enhanced activity by phosphorylation at pH 7.3 by lowering Km and sensitivity to inhibition by L-malate and L-aspartate, while enhancing activation by glucose 6-phosphate. As to expression, expressed in all plant organs, with higher levels in roots.

The protein resides in the cytoplasm. It catalyses the reaction oxaloacetate + phosphate = phosphoenolpyruvate + hydrogencarbonate. With respect to regulation, by light-reversible phosphorylation. Activated by inorganic phosphate (Pi) deprivation and glucose 6-phosphate. Inhibited by L-malate and L-aspartate. In terms of biological role, through the carboxylation of phosphoenolpyruvate (PEP) it forms oxaloacetate, a four-carbon dicarboxylic acid source for the tricarboxylic acid cycle. Contributes probably to the adaptation to inorganic phosphate (Pi) deprivation. The chain is Phosphoenolpyruvate carboxylase 1 (PPC1) from Arabidopsis thaliana (Mouse-ear cress).